A 244-amino-acid polypeptide reads, in one-letter code: Cell adhesion molecule CEACAM4 (244 aa).

Positions 1 to 35 (MGPPSAAPRGGHRPWQGLLITASLLTFWHPPTTVQ) are cleaved as a signal peptide. One can recognise an Ig-like V-type domain in the interval 36-139 (FTIEALPSSA…DSDQATGQLH (104 aa)). Topologically, residues 36–155 (FTIEALPSSA…PGLPVGAVAG (120 aa)) are extracellular. N57, N104, N111, and N126 each carry an N-linked (GlcNAc...) asparagine glycan. A helical membrane pass occupies residues 156-176 (IVTGVLVGVALVAALVCFLLL). Residues 177 to 244 (SRTGRASIQR…QIDHKADVVS (68 aa)) are Cytoplasmic-facing. Residues 186–215 (RDLREQPPPASTPGHGPSHRSTFSAPLPSP) form a disordered region. The ITAM signature appears at 222–236 (YEELLYSDANIYCQI).

The protein belongs to the immunoglobulin superfamily. CEA family. Interacts through its phosphorylated ITAM domain with the SH2 domain-containing cytoplasmic proteins involved in signaling processes during phagocytosis. Post-translationally, N-glycosylated. In terms of processing, the cytoplasmic ITAM-like sequence becomes tyrosine phosphorylated by SRC family PTKs upon ligand-mediated receptor clustering and allows to initiate phagocytosis of bound ligand. In terms of tissue distribution, granulocytes.

It localises to the membrane. Functionally, granulocyte orphan receptor that acts as an trigger efficient phagocytosis of attached particles. This is Cell adhesion molecule CEACAM4 from Homo sapiens (Human).